The primary structure comprises 338 residues: Heat-inducible transcription repressor HrcA (338 aa).

This sequence belongs to the HrcA family.

In terms of biological role, negative regulator of class I heat shock genes (grpE-dnaK-dnaJ and groELS operons). Prevents heat-shock induction of these operons. In Polaromonas sp. (strain JS666 / ATCC BAA-500), this protein is Heat-inducible transcription repressor HrcA.